The sequence spans 2958 residues: Protein CSF1 (2958 aa).

Residues 1–17 (MEAISQLRGVPLTHQKD) lie on the Cytoplasmic side of the membrane. A helical; Signal-anchor for type II membrane protein membrane pass occupies residues 18–38 (FSWVFLVDWILTVVVCLTMIF). Topologically, residues 39–2958 (YMGRIYAYLV…QYVKILDDTH (2920 aa)) are extracellular. N-linked (GlcNAc...) asparagine glycans are attached at residues N82, N117, N144, N271, N478, N530, N816, N821, N839, and N892. Positions 813–834 (GYQNSSLKNESEDKGPMKRSDL) are disordered. Residues 821-834 (NESEDKGPMKRSDL) show a composition bias toward basic and acidic residues. The interval 1175-1196 (MEPSRASFSEDDNDEEADPSSF) is disordered. Over residues 1183–1192 (SEDDNDEEAD) the composition is skewed to acidic residues. 13 N-linked (GlcNAc...) asparagine glycosylation sites follow: N1309, N1368, N1453, N1785, N1921, N2130, N2146, N2280, N2337, N2520, N2578, N2719, and N2869.

Belongs to the CSF1 family. As to quaternary structure, interacts with MCD4; CSF1 channels phosphatidylethanolamine to MCD4 in the endoplasmic reticulum at contact sites to support GPI anchor biosynthesis.

The protein resides in the cell membrane. Its subcellular location is the endoplasmic reticulum membrane. It is found in the mitochondrion membrane. In terms of biological role, tube-forming lipid transport protein which provides phosphatidylethanolamine for glycosylphosphatidylinositol (GPI) anchor synthesis in the endoplasmic reticulum. Required for the glucose and other nutrients uptake at low temperature. The sequence is that of Protein CSF1 from Saccharomyces cerevisiae (strain ATCC 204508 / S288c) (Baker's yeast).